Reading from the N-terminus, the 201-residue chain is Large ribosomal subunit protein uL4 (201 aa).

The interval 51–73 is disordered; it reads EVTGSGKKPWRQKGTGRARAGSV.

It belongs to the universal ribosomal protein uL4 family. In terms of assembly, part of the 50S ribosomal subunit.

Functionally, one of the primary rRNA binding proteins, this protein initially binds near the 5'-end of the 23S rRNA. It is important during the early stages of 50S assembly. It makes multiple contacts with different domains of the 23S rRNA in the assembled 50S subunit and ribosome. In terms of biological role, forms part of the polypeptide exit tunnel. This chain is Large ribosomal subunit protein uL4, found in Erwinia tasmaniensis (strain DSM 17950 / CFBP 7177 / CIP 109463 / NCPPB 4357 / Et1/99).